The following is a 142-amino-acid chain: Group IIE secretory phospholipase A2 (142 aa).

Positions 1 to 19 (MKPPIALACLCLLVPLAGG) are cleaved as a signal peptide. Aspartate 41, glycine 43, tyrosine 45, glycine 47, and glycine 49 together coordinate Ca(2+). Disulfide bonds link cysteine 44–cysteine 135, cysteine 46–cysteine 62, cysteine 61–cysteine 115, cysteine 67–cysteine 142, cysteine 68–cysteine 108, cysteine 77–cysteine 101, and cysteine 95–cysteine 106. Histidine 65 is an active-site residue. Aspartate 66 is a binding site for Ca(2+). Aspartate 109 is a catalytic residue. Positions 130 and 132 each coordinate Ca(2+).

Belongs to the phospholipase A2 family. Ca(2+) serves as cofactor. Highly expressed in skin and uterus, and at lower levels in various other tissues. Expressed in hair follicles, specifically localized in companion cells of the outer root sheath and cuticular cells of the inner root sheath in hair follicles during anagen. Expressed in white and brown adipose tissue.

The protein localises to the secreted. The protein resides in the cytoplasm. The enzyme catalyses a 1,2-diacyl-sn-glycero-3-phosphoethanolamine + H2O = a 1-acyl-sn-glycero-3-phosphoethanolamine + a fatty acid + H(+). The catalysed reaction is 1-hexadecanoyl-2-(9Z-octadecenoyl)-sn-glycero-3-phosphoethanolamine + H2O = 1-hexadecanoyl-sn-glycero-3-phosphoethanolamine + (9Z)-octadecenoate + H(+). It catalyses the reaction 1-hexadecanoyl-2-(9Z,12Z-octadecadienoyl)-sn-glycero-3-phosphoethanolamine + H2O = 1-hexadecanoyl-sn-glycero-3-phosphoethanolamine + (9Z,12Z)-octadecadienoate + H(+). It carries out the reaction 1-hexadecanoyl-2-(5Z,8Z,11Z,14Z-eicosatetraenoyl)-sn-glycero-3-phosphoethanolamine + H2O = 1-hexadecanoyl-sn-glycero-3-phosphoethanolamine + (5Z,8Z,11Z,14Z)-eicosatetraenoate + H(+). The enzyme catalyses 1,2-dihexadecanoyl-sn-glycero-3-phospho-(1'-sn-glycerol) + H2O = 1-hexadecanoyl-sn-glycero-3-phospho-(1'-sn-glycerol) + hexadecanoate + H(+). The catalysed reaction is 1-hexadecanoyl-2-(9Z-octadecenoyl)-sn-glycero-3-phosphoglycerol + H2O = 1-hexadecanoyl-sn-glycero-3-phosphoglycerol + (9Z)-octadecenoate + H(+). It catalyses the reaction a 1,2-diacyl-sn-glycero-3-phosphocholine + H2O = a 1-acyl-sn-glycero-3-phosphocholine + a fatty acid + H(+). It carries out the reaction 1,2-dihexadecanoyl-sn-glycero-3-phosphocholine + H2O = 1-hexadecanoyl-sn-glycero-3-phosphocholine + hexadecanoate + H(+). The enzyme catalyses 1-hexadecanoyl-2-(9Z-octadecenoyl)-sn-glycero-3-phosphocholine + H2O = 1-hexadecanoyl-sn-glycero-3-phosphocholine + (9Z)-octadecenoate + H(+). The catalysed reaction is 1-hexadecanoyl-2-(9Z,12Z-octadecadienoyl)-sn-glycero-3-phosphocholine + H2O = (9Z,12Z)-octadecadienoate + 1-hexadecanoyl-sn-glycero-3-phosphocholine + H(+). It catalyses the reaction 1-hexadecanoyl-2-(4Z,7Z,10Z,13Z,16Z,19Z-docosahexaenoyl)-sn-glycero-3-phosphocholine + H2O = (4Z,7Z,10Z,13Z,16Z,19Z)-docosahexaenoate + 1-hexadecanoyl-sn-glycero-3-phosphocholine + H(+). In terms of biological role, secretory calcium-dependent phospholipase A2 that primarily targets extracellular phospholipids. Hydrolyzes the ester bond of the fatty acyl group attached at sn-2 position of phospholipids (phospholipase A2 activity), releasing various unsaturated fatty acids including oleoate, linoleoate, arachidonate, docosahexaenoate and lysophosphatidylethanolamines in preference to lysophosphatidylcholines. In response to high-fat diet, hydrolyzes minor lipoprotein phospholipids including phosphatidylserines, phosphatidylinositols and phosphatidylglycerols, altering lipoprotein composition and fat storage in adipose tissue and liver. May act in an autocrine and paracrine manner. Contributes to lipid remodeling of cellular membranes and generation of lipid mediators involved in pathogen clearance. Cleaves sn-2 fatty acyl chains of phosphatidylglycerols and phosphatidylethanolamines, which are major components of membrane phospholipids in bacteria. Acts as a hair follicle phospholipase A2. Selectively releases lysophosphatidylethanolamines (LPE) and various unsaturated fatty acids in skin to regulate hair follicle homeostasis. May regulate the inflammatory response by releasing arachidonate, a precursor of prostaglandins and leukotrienes. Upon allergen exposure, may participate in allergic inflammatory response by enhancing leukotriene C4 synthesis and degranulation in mast cells. The sequence is that of Group IIE secretory phospholipase A2 (Pla2g2e) from Mus musculus (Mouse).